The chain runs to 232 residues: Cysteine proteinase inhibitor 7 (232 aa).

A signal peptide spans 1–29; that stretch reads MDMRRASMCMMLICVSLVLLSGFGQFVIC. 2 Cystatin domains span residues 46 to 135 and 152 to 214; these read GGFS…KNII and FDWR…ERGN. The short motif at 91–95 is the Secondary area of contact element; the sequence is QVVAG. Serine 181 carries the post-translational modification Phosphoserine.

It belongs to the cystatin family. Phytocystatin subfamily.

It is found in the secreted. Specific inhibitor of cysteine proteinases. Probably involved in the regulation of endogenous processes and in defense against pests and pathogens. This chain is Cysteine proteinase inhibitor 7 (CYS7), found in Arabidopsis thaliana (Mouse-ear cress).